Consider the following 499-residue polypeptide: uncharacterized protein (499 aa).

2 disordered regions span residues 76-118 (QATA…RLSP) and 208-268 (DFET…DWAN). Positions 87-104 (DPEKQTGKSRYHPSEEIR) are enriched in basic and acidic residues. The span at 208-263 (DFETEDDESGDDDSEDTGEDEDEEEWVAILEDEDEDDDDDDDDDEDDDDSDSDESL) shows a compositional bias: acidic residues. S355 is modified (phosphoserine). Residues 478 to 499 (AEGQIRKLLFPKTNQSTQPKPK) form a disordered region. The segment covering 489–499 (KTNQSTQPKPK) has biased composition (polar residues).

This is an uncharacterized protein from Arabidopsis thaliana (Mouse-ear cress).